Consider the following 269-residue polypeptide: Protein tio (269 aa).

Basic and acidic residues predominate over residues 1-12; that stretch reads MANEPQEHEEGK. The interval 1–127 is disordered; sequence MANEPQEHEE…NETKCPDEQN (127 aa). Over 1–246 the chain is Cytoplasmic; that stretch reads MANEPQEHEE…VEKKLTCVIC (246 aa). A compositionally biased stretch (pro residues) spans 27 to 41; that stretch reads PNIPQDPTPGTPPGP. Residues 61-74 show a composition bias toward low complexity; sequence SEGPPDGSGNSSPP. Polar residues-rich tracts occupy residues 91 to 101 and 114 to 127; these read SESGGNNSAPN and AGNG…DEQN. Tyrosine 136 is subject to Phosphotyrosine; by host LCK. The tract at residues 158–167 is CSKH/LBD2; sequence EEERSPFNKY. Positions 186-195 are SH3B/LBD1; the sequence is IPPPQLPPRP. The chain crosses the membrane as a helical span at residues 247–267; it reads LLIGILVLLILLFMLGFLFLL. Topologically, residues 268–269 are extracellular; the sequence is MK.

In terms of assembly, homodimer. Binds SH3 domain of host LYN, HCK, LCK, SRC, FYN or YES. When tyrosine-phosphorylated, binds to the SH2 domain of host LCK, SRC, or FYN. In terms of processing, phosphorylated by host LCK, SRC and less efficiently by FYN.

The protein resides in the host cell membrane. Functionally, transforms host T-cells, inducing T-cell lymphomia in the host. Activates at least SRC and LCK tyrosines kinases, thereby activating signaling pathway transforming host T-cells. Human T-cells transformed ex vivo display a IL2 indenpendent growth phenotype. The protein is Protein tio of Ateles (AtHV-3).